A 116-amino-acid polypeptide reads, in one-letter code: MKLRHLPLIAAIGLFSTVTLAAGYTGPGATPTTTTVKAALEAADDTPVVLQGTIVKRIKGDIYEFRDATGSMKVEIDDEDFPPMEINDKTRVKLTGEVDRDLVGREIDVEFVEVIK.

An N-terminal signal peptide occupies residues 1–21 (MKLRHLPLIAAIGLFSTVTLA).

The protein localises to the periplasm. Its function is as follows. Plays a role in intracellular Ca(2+) homeostasis. Involved in cell protection against oxidative stress in strain 25W. This is Calcium-regulated OB-fold protein CarO from Pseudomonas aeruginosa (strain ATCC 15692 / DSM 22644 / CIP 104116 / JCM 14847 / LMG 12228 / 1C / PRS 101 / PAO1).